A 440-amino-acid chain; its full sequence is Ribulose bisphosphate carboxylase large chain (440 aa).

An N6,N6,N6-trimethyllysine modification is found at lysine 4. 2 residues coordinate substrate: asparagine 113 and threonine 163. Lysine 165 functions as the Proton acceptor in the catalytic mechanism. Lysine 167 is a binding site for substrate. Mg(2+)-binding residues include lysine 191, aspartate 193, and glutamate 194. N6-carboxylysine is present on lysine 191. Histidine 284 serves as the catalytic Proton acceptor. Residues arginine 285, histidine 317, and serine 369 each contribute to the substrate site.

This sequence belongs to the RuBisCO large chain family. Type I subfamily. In terms of assembly, heterohexadecamer of 8 large chains and 8 small chains; disulfide-linked. The disulfide link is formed within the large subunit homodimers. Requires Mg(2+) as cofactor. In terms of processing, the disulfide bond which can form in the large chain dimeric partners within the hexadecamer appears to be associated with oxidative stress and protein turnover.

It is found in the plastid. The protein localises to the chloroplast. It carries out the reaction 2 (2R)-3-phosphoglycerate + 2 H(+) = D-ribulose 1,5-bisphosphate + CO2 + H2O. The catalysed reaction is D-ribulose 1,5-bisphosphate + O2 = 2-phosphoglycolate + (2R)-3-phosphoglycerate + 2 H(+). Its function is as follows. RuBisCO catalyzes two reactions: the carboxylation of D-ribulose 1,5-bisphosphate, the primary event in carbon dioxide fixation, as well as the oxidative fragmentation of the pentose substrate in the photorespiration process. Both reactions occur simultaneously and in competition at the same active site. The protein is Ribulose bisphosphate carboxylase large chain of Ptychomitrium gardneri (Gardner's ptychomitrium moss).